The primary structure comprises 261 residues: Cytochrome c oxidase subunit 3 (261 aa).

The Mitochondrial matrix portion of the chain corresponds to 1–15; the sequence is MTHQSHAYHMVKPSP. Residues 16-34 form a helical membrane-spanning segment; it reads WPLTGALSALLMTSGLAMW. Residues 35–40 lie on the Mitochondrial intermembrane side of the membrane; it reads FHFHSM. A helical membrane pass occupies residues 41–66; the sequence is TLLMLGLLTNTLTMYQWWRDVTREST. The Mitochondrial matrix portion of the chain corresponds to 67 to 72; that stretch reads YQGHHT. The chain crosses the membrane as a helical span at residues 73–105; the sequence is PPVQKGLRYGMILFITSEVFFFAGFFWAFYHSS. Residues 106–128 lie on the Mitochondrial intermembrane side of the membrane; it reads LAPTPQLGGHWPPTGITPLNPLE. The helical transmembrane segment at 129 to 152 threads the bilayer; that stretch reads VPLLNTSVLLASGVSITWAHHSLM. Topologically, residues 153–155 are mitochondrial matrix; it reads ENN. Residues 156-183 traverse the membrane as a helical segment; that stretch reads RNQMIQALLITILLGLYFTLLQASEYFE. Residues 184–190 lie on the Mitochondrial intermembrane side of the membrane; sequence SPFTISD. The chain crosses the membrane as a helical span at residues 191-223; it reads GIYGSTFFVATGFHGLHVIIGSTFLTICFIRQL. At 224–232 the chain is on the mitochondrial matrix side; the sequence is MFHFTSKHH. A helical transmembrane segment spans residues 233-256; the sequence is FGFEAAAWYWHFVDVVWLFLYVSI. The Mitochondrial intermembrane segment spans residues 257 to 261; sequence YWWGS.

The protein belongs to the cytochrome c oxidase subunit 3 family. In terms of assembly, component of the cytochrome c oxidase (complex IV, CIV), a multisubunit enzyme composed of 14 subunits. The complex is composed of a catalytic core of 3 subunits MT-CO1, MT-CO2 and MT-CO3, encoded in the mitochondrial DNA, and 11 supernumerary subunits COX4I1 (or COX4I2), COX5A, COX5B, COX6A1 (or COX6A2), COX6B1 (or COX6B2), COX6C, COX7A2 (or COX7A1), COX7B, COX7C, COX8A and NDUFA4, which are encoded in the nuclear genome. The complex exists as a monomer or a dimer and forms supercomplexes (SCs) in the inner mitochondrial membrane with NADH-ubiquinone oxidoreductase (complex I, CI) and ubiquinol-cytochrome c oxidoreductase (cytochrome b-c1 complex, complex III, CIII), resulting in different assemblies (supercomplex SCI(1)III(2)IV(1) and megacomplex MCI(2)III(2)IV(2)).

The protein resides in the mitochondrion inner membrane. The catalysed reaction is 4 Fe(II)-[cytochrome c] + O2 + 8 H(+)(in) = 4 Fe(III)-[cytochrome c] + 2 H2O + 4 H(+)(out). Component of the cytochrome c oxidase, the last enzyme in the mitochondrial electron transport chain which drives oxidative phosphorylation. The respiratory chain contains 3 multisubunit complexes succinate dehydrogenase (complex II, CII), ubiquinol-cytochrome c oxidoreductase (cytochrome b-c1 complex, complex III, CIII) and cytochrome c oxidase (complex IV, CIV), that cooperate to transfer electrons derived from NADH and succinate to molecular oxygen, creating an electrochemical gradient over the inner membrane that drives transmembrane transport and the ATP synthase. Cytochrome c oxidase is the component of the respiratory chain that catalyzes the reduction of oxygen to water. Electrons originating from reduced cytochrome c in the intermembrane space (IMS) are transferred via the dinuclear copper A center (CU(A)) of subunit 2 and heme A of subunit 1 to the active site in subunit 1, a binuclear center (BNC) formed by heme A3 and copper B (CU(B)). The BNC reduces molecular oxygen to 2 water molecules using 4 electrons from cytochrome c in the IMS and 4 protons from the mitochondrial matrix. The chain is Cytochrome c oxidase subunit 3 (MT-CO3) from Homo sapiens (Human).